The chain runs to 110 residues: Nucleoid-associated protein Sfum_2790 (110 aa).

It belongs to the YbaB/EbfC family. Homodimer.

It is found in the cytoplasm. It localises to the nucleoid. In terms of biological role, binds to DNA and alters its conformation. May be involved in regulation of gene expression, nucleoid organization and DNA protection. The chain is Nucleoid-associated protein Sfum_2790 from Syntrophobacter fumaroxidans (strain DSM 10017 / MPOB).